Reading from the N-terminus, the 208-residue chain is Protein IncB (208 aa).

This protein is thought to be cis acting and to contain the putative attachment site on the DNA for the cellular partition apparatus. This chain is Protein IncB (incB), found in Escherichia coli.